A 300-amino-acid polypeptide reads, in one-letter code: Porphobilinogen deaminase (300 aa).

Residue Cys241 is modified to S-(dipyrrolylmethanemethyl)cysteine.

This sequence belongs to the HMBS family. In terms of assembly, monomer. The cofactor is dipyrromethane.

It carries out the reaction 4 porphobilinogen + H2O = hydroxymethylbilane + 4 NH4(+). It participates in porphyrin-containing compound metabolism; protoporphyrin-IX biosynthesis; coproporphyrinogen-III from 5-aminolevulinate: step 2/4. Its function is as follows. Tetrapolymerization of the monopyrrole PBG into the hydroxymethylbilane pre-uroporphyrinogen in several discrete steps. The polypeptide is Porphobilinogen deaminase (Sorangium cellulosum (strain So ce56) (Polyangium cellulosum (strain So ce56))).